The following is a 463-amino-acid chain: MSLPTMDKPVRQLFGTDGIRGVAGEYPLDPHTVFAIGRALGARLVEKYQTARVLIGQDTRESSDWISRALARGLESANCGVASAGVITTPGVAYLTRTHGFSAGIVVSASHNPWTDNGIKVFGANGYKLSDDIEHEIEAQIFYHLEELERAESEGEGPAMLPGDDKLREDYAEWLRSQVEGTDFSKFRVLLDCANGAASSIAHLVFPKVGVFSEFTHICPTGRNINANCGALHPEEAAKHVGQSRGRFDLGITFDGDADRALFSDGDGNIVNGDAVLLLAARDMKARGHLKEDTVVATTMSNMGLEAALKRSGIRMLRAAVGDKYVLEEMKKTGATLGGEQSGHILFMDSDATTGDGILTALRVLEVLARSGKSLAELIADLKVFPQVIRNVKVNAKIPMKELPAVMSAIEAAEQDLGDSGRVVVRYSGTEKLARVMIEAESEAKMNQHATAIAEAIQEAIGI.

Catalysis depends on S110, which acts as the Phosphoserine intermediate. Mg(2+) contacts are provided by S110, D255, D257, and D259. S110 carries the phosphoserine modification.

It belongs to the phosphohexose mutase family. The cofactor is Mg(2+). In terms of processing, activated by phosphorylation.

The enzyme catalyses alpha-D-glucosamine 1-phosphate = D-glucosamine 6-phosphate. Functionally, catalyzes the conversion of glucosamine-6-phosphate to glucosamine-1-phosphate. The protein is Phosphoglucosamine mutase of Koribacter versatilis (strain Ellin345).